An 80-amino-acid chain; its full sequence is Large ribosomal subunit protein bL31B (80 aa).

It belongs to the bacterial ribosomal protein bL31 family. Type B subfamily. As to quaternary structure, part of the 50S ribosomal subunit.

This is Large ribosomal subunit protein bL31B from Xanthomonas axonopodis pv. citri (strain 306).